The primary structure comprises 210 residues: Thymidylate kinase (210 aa).

Residue 9–16 (GPEGAGKT) coordinates ATP.

The protein belongs to the thymidylate kinase family.

It catalyses the reaction dTMP + ATP = dTDP + ADP. Functionally, phosphorylation of dTMP to form dTDP in both de novo and salvage pathways of dTTP synthesis. In Thermomicrobium roseum (strain ATCC 27502 / DSM 5159 / P-2), this protein is Thymidylate kinase.